The chain runs to 554 residues: Serine/threonine-protein phosphatase 2B catalytic subunit (554 aa).

Residues D119, H121, and D147 each contribute to the Fe cation site. Zn(2+) is bound by residues D147 and N179. Catalysis depends on H180, which acts as the Proton donor. H228 and H310 together coordinate Zn(2+). The segment at 411–433 (LKESAPTQHKQPAPSENENKADQ) is disordered. A compositionally biased stretch (polar residues) spans 415-426 (APTQHKQPAPSE).

This sequence belongs to the PPP phosphatase family. PP-2B subfamily. In terms of assembly, composed of two components (A and B), the A component is the catalytic subunit and the B component confers calcium sensitivity. Requires Fe(3+) as cofactor. Zn(2+) serves as cofactor.

The enzyme catalyses O-phospho-L-seryl-[protein] + H2O = L-seryl-[protein] + phosphate. The catalysed reaction is O-phospho-L-threonyl-[protein] + H2O = L-threonyl-[protein] + phosphate. Calcium-dependent, calmodulin-stimulated protein phosphatase. This subunit may have a role in the calmodulin activation of calcineurin. Appears to be involved in cytokinesis, mating, transport, nuclear and spindle pole body positioning, and cell shape. The chain is Serine/threonine-protein phosphatase 2B catalytic subunit (ppb1) from Schizosaccharomyces pombe (strain 972 / ATCC 24843) (Fission yeast).